The sequence spans 317 residues: Acetylglutamate kinase (317 aa).

Substrate-binding positions include 70-71, Arg-92, and Asn-191; that span reads GG.

It belongs to the acetylglutamate kinase family. ArgB subfamily.

The protein localises to the cytoplasm. It catalyses the reaction N-acetyl-L-glutamate + ATP = N-acetyl-L-glutamyl 5-phosphate + ADP. Its pathway is amino-acid biosynthesis; L-arginine biosynthesis; N(2)-acetyl-L-ornithine from L-glutamate: step 2/4. In terms of biological role, catalyzes the ATP-dependent phosphorylation of N-acetyl-L-glutamate. This Corynebacterium glutamicum (strain R) protein is Acetylglutamate kinase.